The chain runs to 422 residues: UDP-N-acetylglucosamine 1-carboxyvinyltransferase (422 aa).

Position 22-23 (22-23) interacts with phosphoenolpyruvate; sequence KN. Position 95 (arginine 95) interacts with UDP-N-acetyl-alpha-D-glucosamine. The active-site Proton donor is the cysteine 119. A 2-(S-cysteinyl)pyruvic acid O-phosphothioketal modification is found at cysteine 119. Residues 124–128, aspartate 309, and valine 331 each bind UDP-N-acetyl-alpha-D-glucosamine; that span reads RPIDQ.

It belongs to the EPSP synthase family. MurA subfamily.

The protein localises to the cytoplasm. The catalysed reaction is phosphoenolpyruvate + UDP-N-acetyl-alpha-D-glucosamine = UDP-N-acetyl-3-O-(1-carboxyvinyl)-alpha-D-glucosamine + phosphate. The protein operates within cell wall biogenesis; peptidoglycan biosynthesis. Functionally, cell wall formation. Adds enolpyruvyl to UDP-N-acetylglucosamine. The protein is UDP-N-acetylglucosamine 1-carboxyvinyltransferase of Anaeromyxobacter dehalogenans (strain 2CP-C).